Reading from the N-terminus, the 314-residue chain is Phosphoribosylaminoimidazole-succinocarboxamide synthase (314 aa).

It belongs to the SAICAR synthetase family.

The enzyme catalyses 5-amino-1-(5-phospho-D-ribosyl)imidazole-4-carboxylate + L-aspartate + ATP = (2S)-2-[5-amino-1-(5-phospho-beta-D-ribosyl)imidazole-4-carboxamido]succinate + ADP + phosphate + 2 H(+). The protein operates within purine metabolism; IMP biosynthesis via de novo pathway; 5-amino-1-(5-phospho-D-ribosyl)imidazole-4-carboxamide from 5-amino-1-(5-phospho-D-ribosyl)imidazole-4-carboxylate: step 1/2. The chain is Phosphoribosylaminoimidazole-succinocarboxamide synthase from Bacteroides fragilis (strain ATCC 25285 / DSM 2151 / CCUG 4856 / JCM 11019 / LMG 10263 / NCTC 9343 / Onslow / VPI 2553 / EN-2).